The primary structure comprises 493 residues: Farnesoate epoxidase (493 aa).

Positions Met-1–Cys-24 are cleaved as a signal peptide. Cys-433 provides a ligand contact to heme.

The protein belongs to the cytochrome P450 family. Heme serves as cofactor. As to expression, constitutively expressed in corpora allata from the first instar larval to adult stages.

The enzyme catalyses (2E,6E)-farnesoate + reduced [NADPH--hemoprotein reductase] + O2 = juvenile hormone III carboxylate + oxidized [NADPH--hemoprotein reductase] + H2O + H(+). Its function is as follows. Catalyzes the conversion of farnesoate to juvenile hormone III acid in juvenile hormone biosynthesis. The polypeptide is Farnesoate epoxidase (Bombyx mori (Silk moth)).